Here is a 313-residue protein sequence, read N- to C-terminus: 3'-5' exoribonuclease YhaM (313 aa).

Positions 22–90 (SSVKGTASNG…QLKIRQIRQA (69 aa)) form a DNA-binding region, OB. One can recognise an HD domain in the interval 163 to 279 (HVVSMLRLAK…LHQIDLMDAS (117 aa)).

The protein belongs to the YhaM family.

Its function is as follows. Shows a 3'-5' exoribonuclease activity. The chain is 3'-5' exoribonuclease YhaM from Listeria monocytogenes serovar 1/2a (strain ATCC BAA-679 / EGD-e).